Reading from the N-terminus, the 469-residue chain is Glutamate--tRNA ligase 2 (469 aa).

Positions 11–21 match the 'HIGH' region motif; it reads PSPTGHLHLGG. Positions 238-242 match the 'KMSKS' region motif; it reads KLSKR. Residue lysine 241 participates in ATP binding.

Belongs to the class-I aminoacyl-tRNA synthetase family. Glutamate--tRNA ligase type 1 subfamily. In terms of assembly, monomer.

Its subcellular location is the cytoplasm. The catalysed reaction is tRNA(Glu) + L-glutamate + ATP = L-glutamyl-tRNA(Glu) + AMP + diphosphate. Its function is as follows. Catalyzes the attachment of glutamate to tRNA(Glu) in a two-step reaction: glutamate is first activated by ATP to form Glu-AMP and then transferred to the acceptor end of tRNA(Glu). The chain is Glutamate--tRNA ligase 2 from Ehrlichia chaffeensis (strain ATCC CRL-10679 / Arkansas).